A 232-amino-acid chain; its full sequence is 2-C-methyl-D-erythritol 4-phosphate cytidylyltransferase (232 aa).

Belongs to the IspD/TarI cytidylyltransferase family. IspD subfamily.

The catalysed reaction is 2-C-methyl-D-erythritol 4-phosphate + CTP + H(+) = 4-CDP-2-C-methyl-D-erythritol + diphosphate. The protein operates within isoprenoid biosynthesis; isopentenyl diphosphate biosynthesis via DXP pathway; isopentenyl diphosphate from 1-deoxy-D-xylulose 5-phosphate: step 2/6. Functionally, catalyzes the formation of 4-diphosphocytidyl-2-C-methyl-D-erythritol from CTP and 2-C-methyl-D-erythritol 4-phosphate (MEP). The protein is 2-C-methyl-D-erythritol 4-phosphate cytidylyltransferase of Neorickettsia sennetsu (strain ATCC VR-367 / Miyayama) (Ehrlichia sennetsu).